The primary structure comprises 496 residues: Rhamnulokinase (496 aa).

Residue 13–17 (ASSGR) coordinates ATP. Residues G83 and 236 to 238 (HDT) contribute to the substrate site. Catalysis depends on D237, which acts as the Proton acceptor. Position 259 (T259) interacts with ATP. N296 is a binding site for substrate. Q304 contributes to the ATP binding site. C353 and C370 are disulfide-bonded. G402 provides a ligand contact to ATP. A disulfide bridge links C413 with C417.

This sequence belongs to the rhamnulokinase family. Requires Mg(2+) as cofactor.

The catalysed reaction is L-rhamnulose + ATP = L-rhamnulose 1-phosphate + ADP + H(+). The protein operates within carbohydrate degradation; L-rhamnose degradation; glycerone phosphate from L-rhamnose: step 2/3. In terms of biological role, involved in the catabolism of L-rhamnose (6-deoxy-L-mannose). Catalyzes the transfer of the gamma-phosphate group from ATP to the 1-hydroxyl group of L-rhamnulose to yield L-rhamnulose 1-phosphate. This chain is Rhamnulokinase, found in Pectobacterium carotovorum subsp. carotovorum (strain PC1).